A 267-amino-acid chain; its full sequence is Hydroxynaphthalene reductase-like protein Arp2 (267 aa).

The NADP(+) site is built by Ile25, Asn45, Asp71, and Asn98. Active-site proton donor residues include Ser147 and Ser148. Positions 162, 166, 195, and 197 each coordinate NADP(+). The active-site Proton acceptor is the Tyr162. Lys166 functions as the Lowers pKa of active site Tyr in the catalytic mechanism.

This sequence belongs to the short-chain dehydrogenases/reductases (SDR) family.

In terms of biological role, hydroxynaphthalene reductase-like protein; part of the Pks2 gene cluster that mediates the formation of infectious structures (appressoria), enabling these fungi to kill insects faster. The product of the Pks2 gene cluster is different from the one of Pks1 and has still not been identified. The sequence is that of Hydroxynaphthalene reductase-like protein Arp2 from Metarhizium majus (strain ARSEF 297).